The following is an 852-amino-acid chain: Potassium voltage-gated channel subfamily KQT member 2 (852 aa).

Topologically, residues 1 to 90 (MVQKSRNGGV…LYNVLERPRG (90 aa)) are cytoplasmic. Position 52 is a phosphoserine; by PKA (Ser-52). Residues 91 to 113 (WAFIYHAYVFLLVFSCLVLSVFS) form a helical membrane-spanning segment. The Extracellular segment spans residues 114–123 (TIKEYEKSSE). A helical membrane pass occupies residues 124-145 (GALYILEIVTIVVFGVEYFVRI). At 146-163 (WAAGCCCRYRGWRGRLKF) the chain is on the cytoplasmic side. The chain crosses the membrane as a helical span at residues 164-183 (ARKPFCVIDIMVLIASIAVL). Topologically, residues 184–196 (AAGSQGNVFATSA) are extracellular. A helical; Voltage-sensor membrane pass occupies residues 197–215 (LRSLRFLQILRMIRMDRRG). Arg-214 is an a 1,2-diacyl-sn-glycero-3-phospho-(1D-myo-inositol-4,5-bisphosphate) binding site. The Cytoplasmic portion of the chain corresponds to 216–227 (GTWKLLGSVVYA). Residues 222–323 (GSVVYAHSKE…SGFALKVQEQ (102 aa)) are mediates interaction with SLC5A3. Residues 228–253 (HSKELVTAWYIGFLCLILASFLVYLA) form a helical membrane-spanning segment. Lys-230 lines the a 1,2-diacyl-sn-glycero-3-phospho-(1D-myo-inositol-4,5-bisphosphate) pocket. The Extracellular portion of the chain corresponds to 254–263 (EKGENDHFDT). Positions 264 to 276 (YADALWWGLITLT) form an intramembrane region, pore-forming. The short motif at 277-282 (TIGYGD) is the Selectivity filter element. Over 277-287 (TIGYGDKYPQT) the chain is Extracellular. The helical transmembrane segment at 288 to 314 (WNGRLLAATFTLIGVSFFALPAGILGS) threads the bilayer. The Cytoplasmic segment spans residues 315–852 (GFALKVQEQH…GDVAWAGPRK (538 aa)). Positions 317 to 522 (ALKVQEQHRQ…EDLTPGLKVS (206 aa)) are mediates interaction with calmodulin. Lys-327 contacts a 1,2-diacyl-sn-glycero-3-phospho-(1D-myo-inositol-4,5-bisphosphate). Residues 404-469 (TFRKEPQPEP…SKVPKSWSFG (66 aa)) are disordered. Polar residues predominate over residues 440 to 457 (PQAQTVRRSPSADQSLDD). Residues Ser-448, Ser-450, Ser-454, Ser-458, Ser-460, and Ser-489 each carry the phosphoserine modification. Disordered stretches follow at residues 579–601 (GPTITDKDRTKGPAETELPEDPS), 643–662 (GAKEPEPAPPYHSPEDSRDH), and 672–718 (IVRS…DHGS). The span at 583–592 (TDKDRTKGPA) shows a compositional bias: basic and acidic residues. Ser-655 is subject to Phosphoserine. Phosphoserine occurs at positions 781 and 783. The interval 818–852 (ESDTDSDLCTPCGPPPRSATGEGPFGDVAWAGPRK) is disordered.

Belongs to the potassium channel family. KQT (TC 1.A.1.15) subfamily. Kv7.2/KCNQ2 sub-subfamily. Heterotetramer with KCNQ3; forms heterotetrameric M-channel responsible for the M-current. Homotetrameric; forms a functional homotetrameric channel resulting in the expression of a small M-current. Interacts with calmodulin; the interaction is calcium-independent, constitutive and participates in the proper assembly of a functional M-channel. May associate with KCNE2. Interacts with IQCJ-SCHIP1. Interacts (via the pore module) with SLC5A3/SMIT1; forms a coregulatory complex that alters ion selectivity, voltage dependence and gating kinetics of the channel. Interacts with AKAP5; the interaction may help KCNQ2 channel complex to retain calcium-bound calmodulin. In terms of processing, KCNQ2/KCNQ3 heteromeric current can be increased by intracellular cyclic AMP, an effect that depends on phosphorylation of Ser-52 in the N-terminal region. KCNQ2/KCNQ3 are ubiquitinated by NEDD4L. Ubiquitination leads to protein degradation. Degradation induced by NEDD4L is inhibited by USP36. As to expression, expressed in brain and sympathetic ganglia. In brain, expressed in cortex, hippocampus, and cerebellum. In sympathetic ganglia, expressed at lower levels in celiac ganglia and superior mesenteric ganglia than in superior cervical ganglia.

It localises to the cell membrane. It catalyses the reaction K(+)(in) = K(+)(out). The enzyme catalyses Rb(+)(in) = Rb(+)(out). It carries out the reaction Cs(+)(in) = Cs(+)(out). The catalysed reaction is Na(+)(in) = Na(+)(out). Its activity is regulated as follows. Phosphatidylinositol-4,5-bisphosphate (PIP2) potentiates the activation of KCNQ channels by enhancing the electro-mechanical coupling of the voltage-sensing domain (VSD) and the pore-forming domain (PD). In the closed state of the channel, PIP2 is anchored at the S2-S3 loop; upon channel activation, PIP2 interacts with the S4-S5 linker and is involved in channel gating. Calcium suppresses KCNQ2 and KCNQ2-KCNQ3 channel currents, with calcium-bound calmodulin inducing a change in channel configuration which leads to the reduction of channel affinity for PIP2 and subsequent current suppression. Pore-forming subunit of the voltage-gated potassium (Kv) M-channel which is responsible for the M-current, a key controller of neuronal excitability. M-channel is composed of pore-forming subunits KCNQ2 and KCNQ3 assembled as heterotetramers. The native M-current has a slowly activating and deactivating potassium conductance which plays a critical role in determining the subthreshold electrical excitability of neurons as well as the responsiveness to synaptic inputs. M-channel is selectively permeable in vitro to other cations besides potassium, in decreasing order of affinity K(+) &gt; Rb(+) &gt; Cs(+) &gt; Na(+). M-channel association with SLC5A3/SMIT1 alters channel ion selectivity, increasing Na(+) and Cs(+) permeation relative to K(+). Suppressed by activation of the muscarinic acetylcholine receptor CHRM1. The polypeptide is Potassium voltage-gated channel subfamily KQT member 2 (Rattus norvegicus (Rat)).